The chain runs to 424 residues: Kynureninase (424 aa).

Residues Leu-106, Thr-107, 134 to 137, Asp-219, His-222, and Tyr-244 contribute to the pyridoxal 5'-phosphate site; that span reads FPSD. Lys-245 carries the post-translational modification N6-(pyridoxal phosphate)lysine. Positions 274 and 302 each coordinate pyridoxal 5'-phosphate.

Belongs to the kynureninase family. Homodimer. Pyridoxal 5'-phosphate serves as cofactor.

It catalyses the reaction L-kynurenine + H2O = anthranilate + L-alanine + H(+). It carries out the reaction 3-hydroxy-L-kynurenine + H2O = 3-hydroxyanthranilate + L-alanine + H(+). It functions in the pathway amino-acid degradation; L-kynurenine degradation; L-alanine and anthranilate from L-kynurenine: step 1/1. The protein operates within cofactor biosynthesis; NAD(+) biosynthesis; quinolinate from L-kynurenine: step 2/3. Functionally, catalyzes the cleavage of L-kynurenine (L-Kyn) and L-3-hydroxykynurenine (L-3OHKyn) into anthranilic acid (AA) and 3-hydroxyanthranilic acid (3-OHAA), respectively. This Xanthomonas campestris pv. campestris (strain B100) protein is Kynureninase.